Here is a 322-residue protein sequence, read N- to C-terminus: GDSL esterase/lipase At5g03600 (322 aa).

The active-site Nucleophile is Ser-21. Residues Asp-295 and His-298 contribute to the active site.

This sequence belongs to the 'GDSL' lipolytic enzyme family.

This chain is GDSL esterase/lipase At5g03600, found in Arabidopsis thaliana (Mouse-ear cress).